A 426-amino-acid chain; its full sequence is Glucose-6-phosphate isomerase (426 aa).

Glu-282 functions as the Proton donor in the catalytic mechanism. Residues His-303 and Lys-417 contribute to the active site.

Belongs to the GPI family.

The protein resides in the cytoplasm. The catalysed reaction is alpha-D-glucose 6-phosphate = beta-D-fructose 6-phosphate. The protein operates within carbohydrate biosynthesis; gluconeogenesis. It participates in carbohydrate degradation; glycolysis; D-glyceraldehyde 3-phosphate and glycerone phosphate from D-glucose: step 2/4. Catalyzes the reversible isomerization of glucose-6-phosphate to fructose-6-phosphate. The protein is Glucose-6-phosphate isomerase of Aster yellows witches'-broom phytoplasma (strain AYWB).